Consider the following 361-residue polypeptide: tRNA-specific 2-thiouridylase MnmA (361 aa).

Residues Gly8–Ser15 and Met34 each bind ATP. The interval Asn94–Asp96 is interaction with target base in tRNA. Cys99 functions as the Nucleophile in the catalytic mechanism. Residues Cys99 and Cys195 are joined by a disulfide bond. Gly123 is a binding site for ATP. The interaction with tRNA stretch occupies residues Lys145–Gln147. Cys195 (cysteine persulfide intermediate) is an active-site residue. The tract at residues Arg307–Tyr308 is interaction with tRNA.

This sequence belongs to the MnmA/TRMU family.

It localises to the cytoplasm. The enzyme catalyses S-sulfanyl-L-cysteinyl-[protein] + uridine(34) in tRNA + AH2 + ATP = 2-thiouridine(34) in tRNA + L-cysteinyl-[protein] + A + AMP + diphosphate + H(+). Catalyzes the 2-thiolation of uridine at the wobble position (U34) of tRNA, leading to the formation of s(2)U34. This is tRNA-specific 2-thiouridylase MnmA from Legionella pneumophila (strain Paris).